We begin with the raw amino-acid sequence, 200 residues long: Mediator of RNA polymerase II transcription subunit 22 (200 aa).

Residues 93–122 (SVNEAIDQRNQQLRTLQEECDRKLITLRDE) are a coiled coil. Residues 166 to 200 (LSAPLLASPEPSAGPLQVAAPAHSHAGGPGPTEHA) form a disordered region.

It belongs to the Mediator complex subunit 22 family. In terms of assembly, component of the Mediator complex, which is composed of MED1, MED4, MED6, MED7, MED8, MED9, MED10, MED11, MED12, MED13, MED13L, MED14, MED15, MED16, MED17, MED18, MED19, MED20, MED21, MED22, MED23, MED24, MED25, MED26, MED27, MED29, MED30, MED31, CCNC, CDK8 and CDC2L6/CDK11. The MED12, MED13, CCNC and CDK8 subunits form a distinct module termed the CDK8 module. Mediator containing the CDK8 module is less active than Mediator lacking this module in supporting transcriptional activation. Individual preparations of the Mediator complex lacking one or more distinct subunits have been variously termed ARC, CRSP, DRIP, PC2, SMCC and TRAP.

It is found in the nucleus. Its function is as follows. Component of the Mediator complex, a coactivator involved in the regulated transcription of nearly all RNA polymerase II-dependent genes. Mediator functions as a bridge to convey information from gene-specific regulatory proteins to the basal RNA polymerase II transcription machinery. Mediator is recruited to promoters by direct interactions with regulatory proteins and serves as a scaffold for the assembly of a functional preinitiation complex with RNA polymerase II and the general transcription factors. This is Mediator of RNA polymerase II transcription subunit 22 (MED22) from Homo sapiens (Human).